The following is a 131-amino-acid chain: ATP synthase epsilon chain, chloroplastic (131 aa).

Belongs to the ATPase epsilon chain family. F-type ATPases have 2 components, CF(1) - the catalytic core - and CF(0) - the membrane proton channel. CF(1) has five subunits: alpha(3), beta(3), gamma(1), delta(1), epsilon(1). CF(0) has three main subunits: a, b and c.

The protein resides in the plastid. It localises to the chloroplast thylakoid membrane. Functionally, produces ATP from ADP in the presence of a proton gradient across the membrane. The protein is ATP synthase epsilon chain, chloroplastic of Guillardia theta (Cryptophyte).